The following is a 92-amino-acid chain: Large ribosomal subunit protein bL27 (92 aa).

The propeptide occupies 1-8 (MLMNLQFF). Positions 11–30 (HKGGGSTANGRDSAGRRLGA) are disordered.

This sequence belongs to the bacterial ribosomal protein bL27 family. In terms of processing, the N-terminus is cleaved by ribosomal processing cysteine protease Prp.

This is Large ribosomal subunit protein bL27 from Lactiplantibacillus plantarum (strain ATCC BAA-793 / NCIMB 8826 / WCFS1) (Lactobacillus plantarum).